The following is a 123-amino-acid chain: Ribosome-binding factor A (123 aa).

Belongs to the RbfA family. Monomer. Binds 30S ribosomal subunits, but not 50S ribosomal subunits or 70S ribosomes.

The protein localises to the cytoplasm. Functionally, one of several proteins that assist in the late maturation steps of the functional core of the 30S ribosomal subunit. Associates with free 30S ribosomal subunits (but not with 30S subunits that are part of 70S ribosomes or polysomes). Required for efficient processing of 16S rRNA. May interact with the 5'-terminal helix region of 16S rRNA. The chain is Ribosome-binding factor A from Chlorobium chlorochromatii (strain CaD3).